The sequence spans 207 residues: MRTVVIDYGMGNLRSVSKALEAVGFPEVVVSNDYRVASEADVLVLPGVGAFGDAMKNLEELNLVSVIRRHIEKGKPFLGICLGLQLLFEKSYEHGEHRGLGILKGEVILLPLGVKIPHIGWNQLWFKKESEILEGLKEGDFVYFVHSYRVVPEDESVVLTKTDYGEYFVSSIELDNVVAFQFHPEKSQKKGLKLLENFKRKAEKLTT.

In terms of domain architecture, Glutamine amidotransferase type-1 spans 2-207 (RTVVIDYGMG…FKRKAEKLTT (206 aa)). The active-site Nucleophile is the Cys81. Residues His183 and Glu185 contribute to the active site.

In terms of assembly, heterodimer of HisH and HisF.

It localises to the cytoplasm. The catalysed reaction is 5-[(5-phospho-1-deoxy-D-ribulos-1-ylimino)methylamino]-1-(5-phospho-beta-D-ribosyl)imidazole-4-carboxamide + L-glutamine = D-erythro-1-(imidazol-4-yl)glycerol 3-phosphate + 5-amino-1-(5-phospho-beta-D-ribosyl)imidazole-4-carboxamide + L-glutamate + H(+). It catalyses the reaction L-glutamine + H2O = L-glutamate + NH4(+). Its pathway is amino-acid biosynthesis; L-histidine biosynthesis; L-histidine from 5-phospho-alpha-D-ribose 1-diphosphate: step 5/9. Functionally, IGPS catalyzes the conversion of PRFAR and glutamine to IGP, AICAR and glutamate. The HisH subunit catalyzes the hydrolysis of glutamine to glutamate and ammonia as part of the synthesis of IGP and AICAR. The resulting ammonia molecule is channeled to the active site of HisF. The protein is Imidazole glycerol phosphate synthase subunit HisH (hisH) of Aquifex aeolicus (strain VF5).